Consider the following 375-residue polypeptide: Lipid droplet hydrolase 1 (375 aa).

In terms of domain architecture, AB hydrolase-1 spans Val88–Pro358. Ser177 acts as the Charge relay system in catalysis. The Microbody targeting signal motif lies at Ser373–Leu375.

This sequence belongs to the AB hydrolase superfamily. Lipase family.

It localises to the lipid droplet. It carries out the reaction a triacylglycerol + H2O = a diacylglycerol + a fatty acid + H(+). In terms of biological role, serine hydrolase required for the maintenance of steady state level of non-polar and polar lipids of lipid droplets and thus plays a role in maintaining the lipids homeostasis. Exhibits both esterase and triacylglycerol lipase activity. In Saccharomyces cerevisiae (strain ATCC 204508 / S288c) (Baker's yeast), this protein is Lipid droplet hydrolase 1.